We begin with the raw amino-acid sequence, 438 residues long: UPF0597 protein YE0448 (438 aa).

The protein belongs to the UPF0597 family.

The sequence is that of UPF0597 protein YE0448 from Yersinia enterocolitica serotype O:8 / biotype 1B (strain NCTC 13174 / 8081).